A 325-amino-acid chain; its full sequence is Probable tRNA pseudouridine synthase B (325 aa).

The active-site Nucleophile is D71. Residues 238–313 (LPKIYVKDSA…VAASIERVIM (76 aa)) enclose the PUA domain.

This sequence belongs to the pseudouridine synthase TruB family. Type 2 subfamily.

The catalysed reaction is uridine(55) in tRNA = pseudouridine(55) in tRNA. Could be responsible for synthesis of pseudouridine from uracil-55 in the psi GC loop of transfer RNAs. In Korarchaeum cryptofilum (strain OPF8), this protein is Probable tRNA pseudouridine synthase B.